A 133-amino-acid polypeptide reads, in one-letter code: ATP synthase epsilon chain, chloroplastic (133 aa).

Belongs to the ATPase epsilon chain family. As to quaternary structure, F-type ATPases have 2 components, CF(1) - the catalytic core - and CF(0) - the membrane proton channel. CF(1) has five subunits: alpha(3), beta(3), gamma(1), delta(1), epsilon(1). CF(0) has three main subunits: a, b and c.

The protein resides in the plastid. The protein localises to the chloroplast thylakoid membrane. Functionally, produces ATP from ADP in the presence of a proton gradient across the membrane. This Jasminum nudiflorum (Winter jasmine) protein is ATP synthase epsilon chain, chloroplastic.